A 316-amino-acid chain; its full sequence is tRNA uridine(34) hydroxylase (316 aa).

The Rhodanese domain maps to 123-217 (LDEDTVVIDA…YGKNPETRGE (95 aa)). C177 functions as the Cysteine persulfide intermediate in the catalytic mechanism.

This sequence belongs to the TrhO family.

It carries out the reaction uridine(34) in tRNA + AH2 + O2 = 5-hydroxyuridine(34) in tRNA + A + H2O. In terms of biological role, catalyzes oxygen-dependent 5-hydroxyuridine (ho5U) modification at position 34 in tRNAs. The chain is tRNA uridine(34) hydroxylase from Enterococcus faecalis (strain ATCC 700802 / V583).